The following is a 166-amino-acid chain: Kelch repeat protein B10 (166 aa).

Kelch repeat units lie at residues 25 to 76 (TIFV…STFG) and 77 to 129 (MLYF…KLNN).

It belongs to the poxviruses Kelch family.

The protein is Kelch repeat protein B10 of Oryctolagus cuniculus (Rabbit).